The chain runs to 98 residues: Flagellar hook-basal body complex protein FliE (98 aa).

Positions 22–56 are disordered; it reads KTDNATGAGNTFTQMLDSMSDTQSNAQTSVSNLLT. The segment covering 23–56 has biased composition (polar residues); it reads TDNATGAGNTFTQMLDSMSDTQSNAQTSVSNLLT.

This sequence belongs to the FliE family.

It localises to the bacterial flagellum basal body. The polypeptide is Flagellar hook-basal body complex protein FliE (Listeria innocua serovar 6a (strain ATCC BAA-680 / CLIP 11262)).